An 837-amino-acid polypeptide reads, in one-letter code: Espin (837 aa).

9 ANK repeats span residues 1 to 31 (MALEQAMQAARRGDLDVLRSLHAAGLLGPSL), 35 to 66 (LDALPVHHAARSGKLHCLRYLVEEVALPAVSR), 69 to 99 (NGATPAHDAAATGYLSCLQWLLTQGGCRVQE), 103 to 132 (SGATVLHLAARFGHPDVVNWLLYQGGANSA), 137 to 167 (TGALPIHYAAAKGDLPSMKLLVGHYPEGVNA), 171 to 201 (NGATPLYLACQEGHLEVTKYLVQECSADPHL), 205 to 235 (DGMTPLHAAAQMGHNPVLVWLVSFADVSFEQ), 238 to 267 (DGATAMHFAASRGHTKVLSWLLLHGAEISQ), and 270 to 299 (WGGTPLHDAAENGELECCQILAVNGAGLDV). A phosphoserine mark is found at Ser337 and Ser341. The span at 339–348 (DPSMDLEAKQ) shows a compositional bias: basic and acidic residues. Disordered stretches follow at residues 339 to 459 (DPSM…VGLH), 477 to 712 (DSLK…PATL), 745 to 767 (KLQQKMQEEEEQRRKEEEEEARL), and 785 to 816 (EREQKRKEEERQKLEEIQRAKEQSEKLRTLGY). Over residues 351 to 364 (SGMSSPNTTMSVQP) the composition is skewed to polar residues. Positions 376–395 (LSNYDSCSSSHSSSKGQRST) are enriched in low complexity. 2 positions are modified to phosphoserine: Ser400 and Ser401. Positions 423-455 (SLPPPPPPSFPPPPPPGTQLPPPPPGYPAPNPP) are enriched in pro residues. Phosphoserine occurs at positions 497, 504, and 531. Residues 581 to 604 (LPPPPPPPPLPEALSSPPPAPPLP) are compositionally biased toward pro residues. Low complexity predominate over residues 617–626 (SSSSTGSTKS). Polar residues-rich tracts occupy residues 627–636 (FNMMSPTGDN) and 651–662 (PTPQSKGLTTVF). Ser631 carries the post-translational modification Phosphoserine. Residues 635-652 (DNSELLAEIKAGKSLKPT) enclose the WH2 domain. The span at 663–673 (SGSGQPASQPE) shows a compositional bias: low complexity. A phosphoserine mark is found at Ser670, Ser674, and Ser680. The stretch at 738–814 (KRQVMVRKLQ…KEQSEKLRTL (77 aa)) forms a coiled coil.

As to quaternary structure, monomer. Interacts with PFN2. Binds F-actin in a Ca(2+)-resistant fashion. Interacts (via N-terminal) with BAIAP2 (via SH3-domain). Interacts with MYO3A (via C-terminus). Interacts with MYO3B (via C-terminus). Expressed at high concentration in the microvillar parallel actin bundle (PAB) of hair cells stereocilia in the cochlea and vestibular system. Detected also at high levels of a number of other sensory cell types, including taste receptor cells, solitary chemoreceptor cells, vomeronasal sensory neurons and Merkel cells. Isoform 1 is detected in testis. Isoforms 2 is detected in small intestine and kidney (at protein level). Isoforms 3, 4, 6 and 8 are expressed in Purkinje cells dendritic spines.

The protein resides in the cytoplasm. The protein localises to the cytoskeleton. Its subcellular location is the cell projection. It localises to the stereocilium. It is found in the microvillus. The protein resides in the cell junction. The protein localises to the dendritic spine. Multifunctional actin-bundling protein. Plays a major role in regulating the organization, dimension, dynamics and signaling capacities of the actin filament-rich microvilli in the mechanosensory and chemosensory cells. Required for the assembly and stabilization of the stereociliary parallel actin bundles. Plays a crucial role in the formation and maintenance of inner ear hair cell stereocilia. Involved in the elongation of actin in stereocilia. In extrastriolar hair cells, required for targeting MYO3B to stereocilia tips, and for regulation of stereocilia diameter and staircase formation. This is Espin (Espn) from Rattus norvegicus (Rat).